The chain runs to 98 residues: Class II hydrophobin 1 (98 aa).

The first 16 residues, 1-16 (MQFFTTVVLFAAAAMA), serve as a signal peptide directing secretion. Disulfide bonds link cysteine 29–cysteine 79, cysteine 39–cysteine 70, cysteine 40–cysteine 52, and cysteine 80–cysteine 92.

This sequence belongs to the cerato-ulmin hydrophobin family. As to quaternary structure, homodimer. Homodimers further self-assemble to form highly ordered films at water-air interfaces through intermolecular interactions. As to expression, expressed in mycelium, conidiating mycelium and aerial hyphae.

The protein localises to the secreted. Its subcellular location is the cell wall. Its function is as follows. Aerial growth, conidiation, and dispersal of filamentous fungi in the environment rely upon a capability of their secreting small amphipathic proteins called hydrophobins (HPBs) with low sequence identity. Class I can self-assemble into an outermost layer of rodlet bundles on aerial cell surfaces, conferring cellular hydrophobicity that supports fungal growth, development and dispersal; whereas Class II form highly ordered films at water-air interfaces through intermolecular interactions but contribute nothing to the rodlet structure. Hyd1 is a class II hydrophobin that plays probably a role during conidiophore development and in intraspecific signaling or hyphal fusion. Hyd1 and Hyd3 are jointly required for conidial hydrophobicity and dispersal, but seem not to be involved in mycelia hydrophobicity. Inhibits conidial germination in environments not suitable for mycelial growth. Not necessary for root adhesion and colonization. The sequence is that of Class II hydrophobin 1 from Bionectria ochroleuca (Gliocladium roseum).